The primary structure comprises 1605 residues: Sister chromatid cohesion protein PDS5 homolog A (1605 aa).

HEAT repeat units lie at residues 50–89 (KSIQPFLDAVIKPEILNHQDKDVKLLVASCVSEITRITAP), 96–136 (NIMK…YRSC), 146–183 (DLVKEVFTTFLDVARDDHPEIVFSSMQNIMIVLLEESE), 184–221 (DVQEHLLLILLSKLGRNRSDVRDAARRLAMKVIEHCAP), 261–298 (QALSGVAPYLTGELLADKLETRLKVVGLVGELFSLPGR), 302–339 (EEFDSIFLEFLKRLTDRVVEVRMAILDHIKDCLLSDPL), 341–378 (AEASQIISALCDRLLDYDENIRKQVVAVICDVSVSALT), 380–416 (IPVDTMKLVAERLRDKAILVKTYTMERLTELFRVYCL), 552–591 (ANIWKILTNLLDPNTSITQASRIRDDMLKILSEKHSLYDF), 644–681 (SLFDGAEEELISFLKDDDEMMKEGTLKILAKAGGTIRE), 723–758 (KSLSVLYKRLVDMLEDKRYQPAVLQCLGCIAQIAMP), 821–860 (AGVDDLLGILKNILSFGEVSEDLESSSVDKAHLRLAAAKA), 961–1000 (LYPHHILPYLVHALAHHSCPDVEKCKDVKEYEMIYRQLYL), and 1050–1088 (HAICELGLSIINHLTQKEPDLQGEITPVSLPPTLYKPSE). 2 disordered regions span residues 1155-1182 (LRAQGTKTRKGKKNKSVPAEDENGKNDV) and 1203-1262 (ESSN…PKVQ). Residues 1211–1225 (SPSERAEICQRDQKG) are compositionally biased toward basic and acidic residues. Positions 1226 to 1233 (NKRNVGDA) match the Nuclear localization signal 1 motif. The residue at position 1274 (Ser1274) is a Phosphoserine. The span at 1279-1295 (NVSLDSHDENSDQEKML) shows a compositional bias: basic and acidic residues. 3 disordered regions span residues 1279–1307 (NVSLDSHDENSDQEKMLESISPRKRKKSL), 1324–1353 (ERSRSAGGGDSKLKSASGSMKKRKNVSGLA), and 1423–1605 (GKTA…RTAI). Phosphoserine is present on Ser1299. Basic residues-rich tracts occupy residues 1425–1442 (TAKKSRTSKGNSKKKRSS) and 1464–1476 (KGKRTPKKNLKQL). The Nuclear localization signal 2 motif lies at 1426–1433 (AKKSRTSK). 3 stretches are compositionally biased toward basic and acidic residues: residues 1477–1495 (HPKDTPKSLSLEHEKVESR), 1514–1527 (GEEKSESEGKSLKE), and 1534–1574 (VVNK…NEME). Phosphoserine occurs at positions 1524, 1562, and 1584. Positions 1575–1585 (REAEENAETSD) are enriched in acidic residues. Thr1588 carries the phosphothreonine modification.

It belongs to the PDS5 family. As to quaternary structure, interacts with the cohesin complex. Interacts with DEK3.

It localises to the nucleus. Cohesin cofactor dispensable during the meiotic division but playing an important role in DNA repair by homologous recombination (HR) probably by helping SMC5/SMC6 complex. Regulator of sister chromatid cohesion in mitosis which may stabilize cohesin complex association with chromatin. May couple sister chromatid cohesion during mitosis to DNA replication. Cohesion ensures that chromosome partitioning is accurate in both meiotic and mitotic cells and plays an important role in DNA repair. The chain is Sister chromatid cohesion protein PDS5 homolog A from Arabidopsis thaliana (Mouse-ear cress).